The following is a 471-amino-acid chain: Cell division protein FtsP (471 aa).

The tat-type signal signal peptide spans 1-27; the sequence is MSLSRRSFLQASGVALAAGALPLKAEA. The Plastocyanin-like domain occupies 229-288; it reads VRLRLLNASNARRYELSMTDNRAFHVVASDLGFLPAPMTVKRLSLGPGERREVLVDMSQG.

The protein belongs to the FtsP family. Predicted to be exported by the Tat system. The position of the signal peptide cleavage has not been experimentally proven.

It is found in the periplasm. Cell division protein that is required for growth during stress conditions. May be involved in protecting or stabilizing the divisomal assembly under conditions of stress. This Rahnella sp. (strain Y9602) protein is Cell division protein FtsP.